Reading from the N-terminus, the 278-residue chain is Putative pyruvate, phosphate dikinase regulatory protein (278 aa).

149–156 (GVSRSSKT) contributes to the ADP binding site.

It belongs to the pyruvate, phosphate/water dikinase regulatory protein family. PDRP subfamily.

The catalysed reaction is N(tele)-phospho-L-histidyl/L-threonyl-[pyruvate, phosphate dikinase] + ADP = N(tele)-phospho-L-histidyl/O-phospho-L-threonyl-[pyruvate, phosphate dikinase] + AMP + H(+). It carries out the reaction N(tele)-phospho-L-histidyl/O-phospho-L-threonyl-[pyruvate, phosphate dikinase] + phosphate + H(+) = N(tele)-phospho-L-histidyl/L-threonyl-[pyruvate, phosphate dikinase] + diphosphate. In terms of biological role, bifunctional serine/threonine kinase and phosphorylase involved in the regulation of the pyruvate, phosphate dikinase (PPDK) by catalyzing its phosphorylation/dephosphorylation. The chain is Putative pyruvate, phosphate dikinase regulatory protein from Erythrobacter litoralis (strain HTCC2594).